The following is a 130-amino-acid chain: S-adenosylmethionine decarboxylase proenzyme (130 aa).

The active-site Schiff-base intermediate with substrate; via pyruvic acid is S63. S63 is modified (pyruvic acid (Ser); by autocatalysis). The Proton acceptor; for processing activity role is filled by H68. C83 acts as the Proton donor; for catalytic activity in catalysis.

This sequence belongs to the prokaryotic AdoMetDC family. Type 1 subfamily. As to quaternary structure, heterotetramer of two alpha and two beta chains arranged as a dimer of alpha/beta heterodimers. Requires pyruvate as cofactor. In terms of processing, is synthesized initially as an inactive proenzyme. Formation of the active enzyme involves a self-maturation process in which the active site pyruvoyl group is generated from an internal serine residue via an autocatalytic post-translational modification. Two non-identical subunits are generated from the proenzyme in this reaction, and the pyruvate is formed at the N-terminus of the alpha chain, which is derived from the carboxyl end of the proenzyme. The post-translation cleavage follows an unusual pathway, termed non-hydrolytic serinolysis, in which the side chain hydroxyl group of the serine supplies its oxygen atom to form the C-terminus of the beta chain, while the remainder of the serine residue undergoes an oxidative deamination to produce ammonia and the pyruvoyl group blocking the N-terminus of the alpha chain.

It carries out the reaction S-adenosyl-L-methionine + H(+) = S-adenosyl 3-(methylsulfanyl)propylamine + CO2. Its pathway is amine and polyamine biosynthesis; S-adenosylmethioninamine biosynthesis; S-adenosylmethioninamine from S-adenosyl-L-methionine: step 1/1. Catalyzes the decarboxylation of S-adenosylmethionine to S-adenosylmethioninamine (dcAdoMet), the propylamine donor required for the synthesis of the polyamines spermine and spermidine from the diamine putrescine. This Thermosipho melanesiensis (strain DSM 12029 / CIP 104789 / BI429) protein is S-adenosylmethionine decarboxylase proenzyme.